We begin with the raw amino-acid sequence, 365 residues long: Synapse-associated protein 1 (365 aa).

The tract at residues 1 to 65 (MFGGLSSWLG…QPPTEDPQFL (65 aa)) is disordered. Low complexity predominate over residues 52–62 (EQQQQPPTEDP). The region spanning 172–224 (VQFNFDFDQMYPVALVMLQEDELLSKMRFALVPKLVKEEVFWRNYFYRISLIK) is the BSD domain. Residues 237 to 259 (QASGKEEKSSNRDDNLPLTEAVR) form a disordered region. Basic and acidic residues predominate over residues 240–251 (GKEEKSSNRDDN). Thr-262 carries the post-translational modification Phosphothreonine. Ser-283, Ser-298, and Ser-327 each carry phosphoserine. Residues 344 to 365 (VAESEKRDENWDKEIEKMLQES) are disordered. Residues 346 to 365 (ESEKRDENWDKEIEKMLQES) show a composition bias toward basic and acidic residues.

In terms of assembly, interacts (via phosphorylated form and BSD domain) with AKT1; this interaction is enhanced in a mTORC2-mediated manner in response to epidermal growth factor (EGF) stimulation and activates AKT1. Post-translationally, phosphorylated. Phosphorylation increases in a mTORC2-mediated manner in response to epidermal growth factor (EGF) stimulation. In terms of tissue distribution, expressed in the liver, kidney, skeletal muscle and in white and brown adipose tissues. Expressed in the cortex, cerebellum, thalamus, hippocampus, braistem, olfactory bulb, spinal cord and striatum of the brain. Expressed in most neuropil regions containing glutamatergic synaptic terminals. Expressed in the CA1, CA2 and CA3 perikarya of the hippocampus. Expressed in neurons and Purkinje cells (at the protein level).

It localises to the cytoplasm. It is found in the perinuclear region. The protein resides in the golgi apparatus. Its subcellular location is the perikaryon. The protein localises to the cell projection. It localises to the axon. It is found in the dendrite. The protein resides in the growth cone. Its subcellular location is the presynaptic cell membrane. The protein localises to the postsynaptic cell membrane. It localises to the membrane. In terms of biological role, plays a role in adipocyte differentiation by promoting mTORC2-mediated phosphorylation of AKT1 at 'Ser-473' after growth factor stimulation. The sequence is that of Synapse-associated protein 1 from Mus musculus (Mouse).